Reading from the N-terminus, the 150-residue chain is Protein NrdI (150 aa).

This sequence belongs to the NrdI family.

Its function is as follows. Probably involved in ribonucleotide reductase function. This is Protein NrdI from Mycobacterium avium (strain 104).